Reading from the N-terminus, the 367-residue chain is Histidinol-phosphate aminotransferase (367 aa).

N6-(pyridoxal phosphate)lysine is present on lysine 225.

This sequence belongs to the class-II pyridoxal-phosphate-dependent aminotransferase family. Histidinol-phosphate aminotransferase subfamily. Homodimer. Requires pyridoxal 5'-phosphate as cofactor.

The catalysed reaction is L-histidinol phosphate + 2-oxoglutarate = 3-(imidazol-4-yl)-2-oxopropyl phosphate + L-glutamate. Its pathway is amino-acid biosynthesis; L-histidine biosynthesis; L-histidine from 5-phospho-alpha-D-ribose 1-diphosphate: step 7/9. The sequence is that of Histidinol-phosphate aminotransferase from Hyphomonas neptunium (strain ATCC 15444).